Reading from the N-terminus, the 93-residue chain is Late embryogenesis abundant protein B19.1A (93 aa).

The segment at 1-93 (MASGQQERSQ…IDESKFKTKS (93 aa)) is disordered. 2 stretches are compositionally biased toward basic and acidic residues: residues 9 to 19 (SQLDRKAREGE) and 73 to 93 (GGER…KTKS).

The protein belongs to the small hydrophilic plant seed protein family. In terms of tissue distribution, embryos and young seedlings.

Lea proteins are late embryonic proteins abundant in higher plant seed embryos. It may have a role in desiccation tolerance by acting as an osmoprotective protein or as a desiccation-damage repair protein. This chain is Late embryogenesis abundant protein B19.1A (B19.1A), found in Hordeum vulgare (Barley).